Consider the following 199-residue polypeptide: Putative lectin L633 (199 aa).

Residues Met-1 to Asn-25 form the signal peptide. Residues Cys-35–Asp-48 show a composition bias toward polar residues. The segment at Cys-35–Asn-74 is disordered. The span at Gln-49 to Pro-73 shows a compositional bias: low complexity. Residues Glu-84 to Arg-195 form the Bulb-type lectin domain. A glycan (N-linked (GlcNAc...) asparagine; by host) is linked at Asn-121.

It is found in the secreted. This Acanthamoeba polyphaga (Amoeba) protein is Putative lectin L633.